Consider the following 429-residue polypeptide: Glutamate-1-semialdehyde 2,1-aminomutase 2 (429 aa).

Lysine 268 is subject to N6-(pyridoxal phosphate)lysine.

Belongs to the class-III pyridoxal-phosphate-dependent aminotransferase family. HemL subfamily. Homodimer. It depends on pyridoxal 5'-phosphate as a cofactor.

The protein localises to the cytoplasm. The catalysed reaction is (S)-4-amino-5-oxopentanoate = 5-aminolevulinate. It functions in the pathway porphyrin-containing compound metabolism; protoporphyrin-IX biosynthesis; 5-aminolevulinate from L-glutamyl-tRNA(Glu): step 2/2. This is Glutamate-1-semialdehyde 2,1-aminomutase 2 from Bacillus cereus (strain ATCC 10987 / NRS 248).